We begin with the raw amino-acid sequence, 286 residues long: MARQVICWCFTLNNPLAPLSLHESMKYLVYQTEAGDNGTIHYQGYVEMKKRTSLVQMKKLLPGAHLEKRRGSQGEARAYAMKEDSRVEGPWEFGEFKEVLEDKLRSVMEDMKSTGKRPVEYIEDCCNTYDKSSATLREFRGELKKKQAIEEWQLQRQPWMDEVERLMETKDCRRIIWVYGPQGGEGKTSYAKHLVKTRDAFYSTGGKTADIAFAWDHQELVLFDFPRSFEEYVNYGVIEQLKNGIVQSGKYQSIVKYCNYVEVIVFANFIPRSGMFSEDRIVIVYA.

Positions 2–96 (ARQVICWCFT…VEGPWEFGEF (95 aa)) constitute a CRESS-DNA virus Rep endonuclease domain. Positions 9–12 (CFTL) match the RCR-1 motif. Residues glutamate 33 and histidine 41 each contribute to the a divalent metal cation site. Residues 41–43 (HYQ) carry the RCR-2 motif. The Nuclear localization signal motif lies at 50 to 70 (KRTSLVQMKKLLPGAHLEKRR). Tyrosine 79 serves as the catalytic For DNA cleavage activity. The RCR-3 motif lies at 79-82 (YAMK). Aspartate 84 contacts a divalent metal cation. A Nuclear localization signal motif is present at residues 96-102 (FKEVLED). Residue 180 to 188 (GPQGGEGKT) coordinates ATP.

This sequence belongs to the nanoviridea/circoviridae replication-associated protein family. In terms of assembly, homooligomer (Potential). Rep binds to repeated DNA motifs (iterons). Mg(2+) serves as cofactor. It depends on Mn(2+) as a cofactor.

The protein resides in the host nucleus. It carries out the reaction ATP + H2O = ADP + phosphate + H(+). Functionally, essential for the replication of all genomic viral ssDNA (trans-replication). The closed circular ssDNA genome is first converted to a superhelical dsDNA. Rep binds a specific hairpin at the genome origin of replication. Introduces an endonucleolytic nick within the conserved sequence 5'-A[GT]TATTAC-3' in the intergenic region of the genome, thereby initiating the rolling circle replication (RCR). Following cleavage, binds covalently to the 5'-phosphate of DNA as a tyrosyl ester. The cleavage gives rise to a free 3'-OH that serves as a primer for the cellular DNA polymerase. The polymerase synthesizes the (+) strand DNA by rolling circle mechanism. After one round of replication, a Rep-catalyzed nucleotidyl transfer reaction releases a circular single-stranded virus genome, thereby terminating the replication. Displays origin-specific DNA cleavage, nucleotidyl transferase, ATPase and helicase activities. This is Master replication protein (DNA-R) from Subterranean clover stunt virus (strain F) (SCSV).